The sequence spans 110 residues: Large ribosomal subunit protein uL22 (110 aa).

Belongs to the universal ribosomal protein uL22 family. Part of the 50S ribosomal subunit.

In terms of biological role, this protein binds specifically to 23S rRNA; its binding is stimulated by other ribosomal proteins, e.g. L4, L17, and L20. It is important during the early stages of 50S assembly. It makes multiple contacts with different domains of the 23S rRNA in the assembled 50S subunit and ribosome. Its function is as follows. The globular domain of the protein is located near the polypeptide exit tunnel on the outside of the subunit, while an extended beta-hairpin is found that lines the wall of the exit tunnel in the center of the 70S ribosome. The sequence is that of Large ribosomal subunit protein uL22 from Enterobacter sp. (strain 638).